We begin with the raw amino-acid sequence, 147 residues long: Hemoglobin subunit beta (147 aa).

N-acetylvaline is present on Val-2. The Globin domain occupies 3–147 (HLTGDEKAAV…VANALAHKYH (145 aa)). Phosphothreonine is present on Thr-13. Phosphoserine is present on Ser-45. Lys-60 carries the N6-acetyllysine modification. His-64 serves as a coordination point for heme b. Lys-83 carries the N6-acetyllysine modification. Residue His-93 participates in heme b binding. Position 94 is an S-nitrosocysteine (Cys-94). N6-acetyllysine is present on Lys-145.

The protein belongs to the globin family. Heterotetramer of two alpha chains and two beta chains. Red blood cells.

In terms of biological role, involved in oxygen transport from the lung to the various peripheral tissues. The protein is Hemoglobin subunit beta (HBB) of Saimiri sciureus (Common squirrel monkey).